Consider the following 247-residue polypeptide: MANPIEQFKIQPLVPLKVGSVDISFTNSSAMMVLSICLITLFLTLSVRSRALVPGRWQSMAEVFYEFIAGMLRDNVGQEGRKYFPFIFSLFMFVLFGNLLGMMPIPVIGFTYTSHVIVTFAMALVVFVGVTVIGFARHGTHYLRMFFPHGAPIATAVILIPIELISYFSRPFSLAVRLFANMTVGHIILKVMGGFVVSLGAFYLIPGAVPFAFLSAITVLEFGIALLQAYVFTILSCIYLHDAIHMH.

6 helical membrane passes run 23–43 (ISFT…TLFL), 90–110 (LFMF…VIGF), 116–136 (VIVT…IGFA), 145–165 (MFFP…IELI), 194–214 (GFVV…FAFL), and 215–235 (SAIT…FTIL).

It belongs to the ATPase A chain family. F-type ATPases have 2 components, CF(1) - the catalytic core - and CF(0) - the membrane proton channel. CF(1) has five subunits: alpha(3), beta(3), gamma(1), delta(1), epsilon(1). CF(0) has three main subunits: a(1), b(2) and c(9-12). The alpha and beta chains form an alternating ring which encloses part of the gamma chain. CF(1) is attached to CF(0) by a central stalk formed by the gamma and epsilon chains, while a peripheral stalk is formed by the delta and b chains.

It is found in the cell inner membrane. In terms of biological role, key component of the proton channel; it plays a direct role in the translocation of protons across the membrane. This chain is ATP synthase subunit a, found in Paramagnetospirillum magneticum (strain ATCC 700264 / AMB-1) (Magnetospirillum magneticum).